The primary structure comprises 93 residues: YcgL domain-containing protein KPK_1976 (93 aa).

A YcgL domain is found at 1–85 (MFCVIYRSTK…PSENLLKKHL (85 aa)).

The polypeptide is YcgL domain-containing protein KPK_1976 (Klebsiella pneumoniae (strain 342)).